A 213-amino-acid polypeptide reads, in one-letter code: V-type ATP synthase subunit D (213 aa).

This sequence belongs to the V-ATPase D subunit family.

Its function is as follows. Produces ATP from ADP in the presence of a proton gradient across the membrane. The polypeptide is V-type ATP synthase subunit D (Clostridium botulinum (strain Alaska E43 / Type E3)).